Reading from the N-terminus, the 727-residue chain is YTH domain-containing protein 1 (727 aa).

Positions 1 to 12 (MAADSREEKDGE) are enriched in basic and acidic residues. The segment at 1–338 (MAADSREEKD…KHEKLSSSVR (338 aa)) is disordered. Position 35 is a phosphoserine (Ser-35). Residues 50-59 (DRMESTDTKR) show a composition bias toward basic and acidic residues. The segment covering 63–90 (SVHSRQLVSKPLSSSVSNNKRIVSTKGK) has biased composition (polar residues). The span at 91–115 (SATEYKNEEYQRSERNKRLDADRKI) shows a compositional bias: basic and acidic residues. Residue Lys-96 forms a Glycyl lysine isopeptide (Lys-Gly) (interchain with G-Cter in SUMO2) linkage. Phosphoserine is present on residues Ser-118 and Ser-120. Residues 124–144 (EPYKNQPEKTCVRKRDPERRA) show a composition bias toward basic and acidic residues. Ser-146 bears the Phosphoserine mark. At Thr-148 the chain carries Phosphothreonine. Composition is skewed to basic and acidic residues over residues 151 to 163 (GSERIGLEVDRRA) and 170 to 185 (SKEEVNSEEYGSDHET). Positions 199–254 (ENEEEGVEEDVEEDEEVEEDAEEDEEVDEDGEEEEEEEEEEEEEEEEEEEEYEQDE) are enriched in acidic residues. The segment covering 255–270 (RDQKEEGNDYDTRSEA) has biased composition (basic and acidic residues). The span at 280 to 289 (FTDGSVRSGS) shows a compositional bias: polar residues. Ser-308, Ser-315, Ser-317, Ser-318, and Ser-320 each carry phosphoserine. Low complexity predominate over residues 315–325 (SGSSASESYAG). The 138-residue stretch at 355–492 (ARFFLIKSNN…ECGTQLCLLF (138 aa)) folds into the YTH domain. Residues 361–363 (KSN) and 377–378 (WS) contribute to the RNA site. Ser-424 is modified (phosphoserine). Trp-428 is an RNA binding site. At Ser-435 the chain carries Phosphoserine. Position 476 (Asp-476) interacts with RNA. The span at 508 to 523 (RHKRRMHSQPRSRGRP) shows a compositional bias: basic residues. Disordered stretches follow at residues 508-564 (RHKR…PGYL), 607-643 (GMPPYPGMEQPPHHPYYQHHAPPPQAHPPYSGHHPVP), and 669-727 (AVVS…RYRR). The span at 524-564 (SRREPVRDVGRRRPEDYDIHNSRKKPRIDYPPEFHQRPGYL) shows a compositional bias: basic and acidic residues. Position 545 is a phosphoserine (Ser-545). The span at 679–727 (RERDRERERDRPRDNRRDRERDRGRDRERERERLCDRDRDRGERGRYRR) shows a compositional bias: basic and acidic residues.

As to quaternary structure, interacts with SRSF1. Interacts with SRSF2. Interacts with SRSF3. Interacts with SRSF7. Interacts with SRSF10. Interacts with CPSF6. Interacts with KHDRBS1/SAM68. Interacts with TRA2B. Interacts with KHDRBS3. Interacts with EMD. Interacts with RBMX. Interacts with ZCCHC8. Post-translationally, tyrosine phosphorylated.

It is found in the nucleus. It localises to the nucleus speckle. In terms of biological role, regulator of alternative splicing that specifically recognizes and binds N6-methyladenosine (m6A)-containing RNAs. M6A is a modification present at internal sites of mRNAs and some non-coding RNAs and plays a role in the efficiency of mRNA splicing, processing and stability. Acts as a key regulator of exon-inclusion or exon-skipping during alternative splicing via interaction with mRNA splicing factors SRSF3 and SRSF10. Specifically binds m6A-containing mRNAs and promotes recruitment of SRSF3 to its mRNA-binding elements adjacent to m6A sites, leading to exon-inclusion during alternative splicing. In contrast, interaction with SRSF3 prevents interaction with SRSF10, a splicing factor that promotes exon skipping: this prevents SRSF10 from binding to its mRNA-binding sites close to m6A-containing regions, leading to inhibit exon skipping during alternative splicing. May also regulate alternative splice site selection. Also involved in nuclear export of m6A-containing mRNAs via interaction with SRSF3: interaction with SRSF3 facilitates m6A-containing mRNA-binding to both SRSF3 and NXF1, promoting mRNA nuclear export. Involved in S-adenosyl-L-methionine homeostasis by regulating expression of MAT2A transcripts, probably by binding m6A-containing MAT2A mRNAs. Also recognizes and binds m6A on other RNA molecules. Involved in random X inactivation mediated by Xist RNA: recognizes and binds m6A-containing Xist and promotes transcription repression activity of Xist. Also recognizes and binds m6A-containing single-stranded DNA. Involved in germline development: required for spermatogonial development in males and oocyte growth and maturation in females, probably via its role in alternative splicing. The protein is YTH domain-containing protein 1 of Homo sapiens (Human).